Reading from the N-terminus, the 153-residue chain is Putative transmembrane protein INAFM2 (153 aa).

Residues Met-1 to Ala-23 show a composition bias toward basic and acidic residues. The segment at Met-1–Lys-24 is disordered. Residues Leu-36–Tyr-56 traverse the membrane as a helical segment. The segment at Ala-66 to Arg-153 is disordered. Positions Gly-79–Ser-101 are enriched in low complexity. Positions Pro-118–Gly-131 are enriched in pro residues.

The protein resides in the membrane. This Homo sapiens (Human) protein is Putative transmembrane protein INAFM2.